A 360-amino-acid polypeptide reads, in one-letter code: Photosystem II protein D1 (360 aa).

The next 3 helical transmembrane spans lie at 29-46, 118-133, and 142-156; these read YIGWFGVLMIPTLLTATS, HFLTGVACYIGREWEL, and WISVAFTAPVAAAAA. Chlorophyll a is bound at residue His118. Tyr126 is a pheophytin a binding site. The [CaMn4O5] cluster site is built by Asp170 and Glu189. A helical transmembrane segment spans residues 197–218; the sequence is FHQLGVAGVFGGSLFSAMHGSL. Chlorophyll a is bound at residue His198. Residues His215 and 264–265 contribute to the a quinone site; that span reads SF. Residue His215 coordinates Fe cation. Fe cation is bound at residue His272. Residues 274-288 traverse the membrane as a helical segment; sequence FLGLWPVVGIWLTAL. Positions 332, 333, 342, and 344 each coordinate [CaMn4O5] cluster. The propeptide occupies 345–360; it reads SGESLPVALTAPAVNG.

Belongs to the reaction center PufL/M/PsbA/D family. In terms of assembly, PSII is composed of 1 copy each of membrane proteins PsbA, PsbB, PsbC, PsbD, PsbE, PsbF, PsbH, PsbI, PsbJ, PsbK, PsbL, PsbM, PsbT, PsbX, PsbY, PsbZ, Psb30/Ycf12, at least 3 peripheral proteins of the oxygen-evolving complex and a large number of cofactors. It forms dimeric complexes. The D1/D2 heterodimer binds P680, chlorophylls that are the primary electron donor of PSII, and subsequent electron acceptors. It shares a non-heme iron and each subunit binds pheophytin, quinone, additional chlorophylls, carotenoids and lipids. D1 provides most of the ligands for the Mn4-Ca-O5 cluster of the oxygen-evolving complex (OEC). There is also a Cl(-1) ion associated with D1 and D2, which is required for oxygen evolution. The PSII complex binds additional chlorophylls, carotenoids and specific lipids. is required as a cofactor. Post-translationally, tyr-161 forms a radical intermediate that is referred to as redox-active TyrZ, YZ or Y-Z. In terms of processing, C-terminally processed by CTPA; processing is essential to allow assembly of the oxygen-evolving complex and thus photosynthetic growth.

Its subcellular location is the plastid. It localises to the chloroplast thylakoid membrane. The enzyme catalyses 2 a plastoquinone + 4 hnu + 2 H2O = 2 a plastoquinol + O2. Its function is as follows. Photosystem II (PSII) is a light-driven water:plastoquinone oxidoreductase that uses light energy to abstract electrons from H(2)O, generating O(2) and a proton gradient subsequently used for ATP formation. It consists of a core antenna complex that captures photons, and an electron transfer chain that converts photonic excitation into a charge separation. The D1/D2 (PsbA/PsbD) reaction center heterodimer binds P680, the primary electron donor of PSII as well as several subsequent electron acceptors. This is Photosystem II protein D1 from Porphyra purpurea (Red seaweed).